The chain runs to 295 residues: Glutamyl-Q tRNA(Asp) synthetase (295 aa).

Residues 9–13 (RFAPT) and glutamate 45 contribute to the L-glutamate site. The 'HIGH' region signature appears at 12-22 (PTPSGFLHFGS). Residues cysteine 101, cysteine 103, tyrosine 115, and cysteine 119 each contribute to the Zn(2+) site. L-glutamate is bound by residues tyrosine 172 and arginine 190. The 'KMSKS' region signature appears at 228 to 232 (KLGKS). Position 231 (lysine 231) interacts with ATP.

Belongs to the class-I aminoacyl-tRNA synthetase family. GluQ subfamily. Requires Zn(2+) as cofactor.

Catalyzes the tRNA-independent activation of glutamate in presence of ATP and the subsequent transfer of glutamate onto a tRNA(Asp). Glutamate is transferred on the 2-amino-5-(4,5-dihydroxy-2-cyclopenten-1-yl) moiety of the queuosine in the wobble position of the QUC anticodon. This is Glutamyl-Q tRNA(Asp) synthetase from Pseudomonas putida (strain GB-1).